The following is a 334-amino-acid chain: MKHKFLVSFLLGLTISFAGAQVIAKTPSVNNAPVARSVNQSPIQLEVIKSYQGHTLKGEAIIQIHYSQDGNYLLSTATDGLAKLWTADGELVREFAGKPVAMIFNGAFSRDGKAIITAGYNGVARIWDVQGNVLGEILGHTSAVTDVVFLSDDMGVVTSSDDGTIEGWSNIKEPLFTVTRPGVSRNMDFNAQTNLIAVTQDIGEITLLNPAGKVVRIIETDQGRLNDVDFSQDGKLLVTAGFDGTARVFNLDGQEILKIDVLDDGWVTGVAINQDNLIATVSDDGILRVWNLQGQLLGQYNPNLERLGSVSFHPNGKNLAIAAYHGTIILLELQ.

5 WD repeats span residues 56–86, 98–128, 139–169, 220–250, and 262–291; these read LKGE…KLWT, KPVA…RIWD, GHTS…EGWS, TDQG…RVFN, and LDDG…RVWN.

This is an uncharacterized protein from Synechocystis sp. (strain ATCC 27184 / PCC 6803 / Kazusa).